A 553-amino-acid chain; its full sequence is Dihydroxy-acid dehydratase (553 aa).

Residue aspartate 78 participates in Mg(2+) binding. A [2Fe-2S] cluster-binding site is contributed by cysteine 119. Mg(2+)-binding residues include aspartate 120 and lysine 121. Residue lysine 121 is modified to N6-carboxylysine. Cysteine 193 serves as a coordination point for [2Fe-2S] cluster. Position 441 (glutamate 441) interacts with Mg(2+). The Proton acceptor role is filled by serine 467.

The protein belongs to the IlvD/Edd family. Homodimer. It depends on [2Fe-2S] cluster as a cofactor. Mg(2+) serves as cofactor.

The catalysed reaction is (2R)-2,3-dihydroxy-3-methylbutanoate = 3-methyl-2-oxobutanoate + H2O. It catalyses the reaction (2R,3R)-2,3-dihydroxy-3-methylpentanoate = (S)-3-methyl-2-oxopentanoate + H2O. It participates in amino-acid biosynthesis; L-isoleucine biosynthesis; L-isoleucine from 2-oxobutanoate: step 3/4. Its pathway is amino-acid biosynthesis; L-valine biosynthesis; L-valine from pyruvate: step 3/4. In terms of biological role, functions in the biosynthesis of branched-chain amino acids. Catalyzes the dehydration of (2R,3R)-2,3-dihydroxy-3-methylpentanoate (2,3-dihydroxy-3-methylvalerate) into 2-oxo-3-methylpentanoate (2-oxo-3-methylvalerate) and of (2R)-2,3-dihydroxy-3-methylbutanoate (2,3-dihydroxyisovalerate) into 2-oxo-3-methylbutanoate (2-oxoisovalerate), the penultimate precursor to L-isoleucine and L-valine, respectively. In Geobacter sulfurreducens (strain ATCC 51573 / DSM 12127 / PCA), this protein is Dihydroxy-acid dehydratase.